A 341-amino-acid chain; its full sequence is N-acetyl-gamma-glutamyl-phosphate reductase (341 aa).

The active site involves Cys-147.

Belongs to the NAGSA dehydrogenase family. Type 1 subfamily.

Its subcellular location is the cytoplasm. It carries out the reaction N-acetyl-L-glutamate 5-semialdehyde + phosphate + NADP(+) = N-acetyl-L-glutamyl 5-phosphate + NADPH + H(+). It participates in amino-acid biosynthesis; L-arginine biosynthesis; N(2)-acetyl-L-ornithine from L-glutamate: step 3/4. Its function is as follows. Catalyzes the NADPH-dependent reduction of N-acetyl-5-glutamyl phosphate to yield N-acetyl-L-glutamate 5-semialdehyde. In Dehalococcoides mccartyi (strain ATCC BAA-2100 / JCM 16839 / KCTC 5957 / BAV1), this protein is N-acetyl-gamma-glutamyl-phosphate reductase.